We begin with the raw amino-acid sequence, 71 residues long: uncharacterized protein (71 aa).

Positions serine 20–arginine 32 are enriched in polar residues. The tract at residues serine 20–arginine 46 is disordered.

This is an uncharacterized protein from Rhizobium leguminosarum.